A 95-amino-acid chain; its full sequence is Aspartyl/glutamyl-tRNA(Asn/Gln) amidotransferase subunit C (95 aa).

It belongs to the GatC family. As to quaternary structure, heterotrimer of A, B and C subunits.

The enzyme catalyses L-glutamyl-tRNA(Gln) + L-glutamine + ATP + H2O = L-glutaminyl-tRNA(Gln) + L-glutamate + ADP + phosphate + H(+). It carries out the reaction L-aspartyl-tRNA(Asn) + L-glutamine + ATP + H2O = L-asparaginyl-tRNA(Asn) + L-glutamate + ADP + phosphate + 2 H(+). Its function is as follows. Allows the formation of correctly charged Asn-tRNA(Asn) or Gln-tRNA(Gln) through the transamidation of misacylated Asp-tRNA(Asn) or Glu-tRNA(Gln) in organisms which lack either or both of asparaginyl-tRNA or glutaminyl-tRNA synthetases. The reaction takes place in the presence of glutamine and ATP through an activated phospho-Asp-tRNA(Asn) or phospho-Glu-tRNA(Gln). The chain is Aspartyl/glutamyl-tRNA(Asn/Gln) amidotransferase subunit C from Acetivibrio thermocellus (strain ATCC 27405 / DSM 1237 / JCM 9322 / NBRC 103400 / NCIMB 10682 / NRRL B-4536 / VPI 7372) (Clostridium thermocellum).